The chain runs to 501 residues: Dynein regulatory complex subunit 5 (501 aa).

A compositionally biased stretch (polar residues) spans 1–23 (MQETVTTSALLDPSHSSVSTQDK). Disordered regions lie at residues 1 to 56 (MQET…HPGA) and 203 to 222 (PAQLRPGDQSDSGSEGEMEE). Residues 24–34 (SSTGGHTSSTG) are compositionally biased toward low complexity. Over residues 35–49 (PQPSKPSITPVSAKS) the composition is skewed to polar residues. LRR repeat units lie at residues 308 to 321 (VLEELDLSHNLIGD), 335 to 355 (RLRVLNLANNQVRAPGAQSLA), 363 to 383 (NLISLNLRLNCIEDEGGQALA), 391 to 411 (CLTTLHLGGNELSEPTATLLS), and 419 to 439 (TLTSINLSCNHIGLDGGKQLL).

This sequence belongs to the DRC5 family. As to quaternary structure, component of the nexin-dynein regulatory complex (N-DRC). Interacts with DRC1. Interacts with FBXL13/DRC6, DRC3 and DRC7.

It localises to the cell projection. The protein resides in the cilium. Its subcellular location is the flagellum. It is found in the cytoplasm. The protein localises to the cytoskeleton. It localises to the flagellum axoneme. In terms of biological role, component of the nexin-dynein regulatory complex (N-DRC) a key regulator of ciliary/flagellar motility which maintains the alignment and integrity of the distal axoneme and regulates microtubule sliding in motile axonemes. May play a role in the assembly of N-DRC. May be required for sperm motility. This chain is Dynein regulatory complex subunit 5 (TCTE1), found in Macaca fascicularis (Crab-eating macaque).